The sequence spans 950 residues: Glycine dehydrogenase (decarboxylating) (950 aa).

N6-(pyridoxal phosphate)lysine is present on Lys-698.

Belongs to the GcvP family. As to quaternary structure, the glycine cleavage system is composed of four proteins: P, T, L and H. Pyridoxal 5'-phosphate serves as cofactor.

The catalysed reaction is N(6)-[(R)-lipoyl]-L-lysyl-[glycine-cleavage complex H protein] + glycine + H(+) = N(6)-[(R)-S(8)-aminomethyldihydrolipoyl]-L-lysyl-[glycine-cleavage complex H protein] + CO2. Functionally, the glycine cleavage system catalyzes the degradation of glycine. The P protein binds the alpha-amino group of glycine through its pyridoxal phosphate cofactor; CO(2) is released and the remaining methylamine moiety is then transferred to the lipoamide cofactor of the H protein. This is Glycine dehydrogenase (decarboxylating) from Neisseria gonorrhoeae (strain NCCP11945).